Here is a 714-residue protein sequence, read N- to C-terminus: Fatty acid oxidation complex subunit alpha (714 aa).

An enoyl-CoA hydratase region spans residues methionine 1–proline 190. The 3-hydroxyacyl-CoA dehydrogenase stretch occupies residues alanine 306–glutamine 714.

This sequence in the N-terminal section; belongs to the enoyl-CoA hydratase/isomerase family. The protein in the central section; belongs to the 3-hydroxyacyl-CoA dehydrogenase family. Heterotetramer of two alpha chains (FadJ) and two beta chains (FadI).

It localises to the cytoplasm. The enzyme catalyses a (3S)-3-hydroxyacyl-CoA = a (2E)-enoyl-CoA + H2O. It carries out the reaction a 4-saturated-(3S)-3-hydroxyacyl-CoA = a (3E)-enoyl-CoA + H2O. The catalysed reaction is a (3S)-3-hydroxyacyl-CoA + NAD(+) = a 3-oxoacyl-CoA + NADH + H(+). It catalyses the reaction (3S)-3-hydroxybutanoyl-CoA = (3R)-3-hydroxybutanoyl-CoA. It participates in lipid metabolism; fatty acid beta-oxidation. Functionally, catalyzes the formation of a hydroxyacyl-CoA by addition of water on enoyl-CoA. Also exhibits 3-hydroxyacyl-CoA epimerase and 3-hydroxyacyl-CoA dehydrogenase activities. The protein is Fatty acid oxidation complex subunit alpha of Escherichia coli O6:K15:H31 (strain 536 / UPEC).